We begin with the raw amino-acid sequence, 116 residues long: MCKHVLNAQVSIRTACCRRWIDCIECHNEIADHPLLKTSELTLICKKCRKAFRIQFDQTMDESDEYCPNCDNHFVIDAITKVEKPKAPISPKLDLRMLNQEEKELEELLDETTRLG.

A CHY-type zinc finger spans residues 1 to 72; the sequence is MCKHVLNAQV…SDEYCPNCDN (72 aa). Positions 2, 4, 16, 17, 23, 26, 27, 33, 45, 48, 67, and 70 each coordinate Zn(2+).

It is found in the cytoplasm. This is an uncharacterized protein from Schizosaccharomyces pombe (strain 972 / ATCC 24843) (Fission yeast).